A 118-amino-acid polypeptide reads, in one-letter code: MRSAKLKFEKRRSRIRHKIAKTANRARLSIFKSGRHIYAQIIDDTKSVTIASASTLDEKIKKLKKSHCNVENATKIGELIAEKAVSCGVEEVVFDRSGYKYHGVVKALADAARKKIRF.

Belongs to the universal ribosomal protein uL18 family. Part of the 50S ribosomal subunit; part of the 5S rRNA/L5/L18/L25 subcomplex. Contacts the 5S and 23S rRNAs.

Functionally, this is one of the proteins that bind and probably mediate the attachment of the 5S RNA into the large ribosomal subunit, where it forms part of the central protuberance. The sequence is that of Large ribosomal subunit protein uL18 from Rickettsia bellii (strain OSU 85-389).